The chain runs to 531 residues: Acetate CoA-transferase YdiF (531 aa).

Catalysis depends on Glu-333, which acts as the 5-glutamyl coenzyme A thioester intermediate.

The protein belongs to the 3-oxoacid CoA-transferase family. Homotetramer; dimer of dimers.

The catalysed reaction is an acyl-CoA + acetate = a carboxylate + acetyl-CoA. CoA transferase having broad substrate specificity for short-chain acyl-CoA thioesters with the activity decreasing when the length of the carboxylic acid chain exceeds four carbons. Exhibits high activity with acetoacetyl-CoA, propionyl-CoA, crotonoyl-CoA or butyryl-CoA as donors, with acetate as an acceptor. When acetyl-CoA is used as the donor, propionate, acetoacetate, butyrate, isobutyrate, and 4-hydroxybutyrate can be utilized as acceptors but not isovalerate. May play a role in short-chain fatty acid metabolism in E.coli. This chain is Acetate CoA-transferase YdiF, found in Escherichia coli O157:H7.